Reading from the N-terminus, the 262-residue chain is Phosphoribosyl 1,2-cyclic phosphate 1,2-diphosphodiesterase (262 aa).

9 residues coordinate Mn(2+): histidine 6, histidine 8, aspartate 13, histidine 38, glutamate 63, histidine 76, histidine 193, aspartate 245, and histidine 247.

The protein belongs to the PHP family. It depends on Mn(2+) as a cofactor.

It catalyses the reaction alpha-D-ribose 1,2-cyclic phosphate 5-phosphate + H2O = D-ribose 2,5-bisphosphate + H(+). The catalysed reaction is D-ribose 2,5-bisphosphate + H2O = D-ribose 5-phosphate + phosphate. Functionally, involved in degradation of methylphosphonate. Catalyzes the hydrolysis of the phosphate ester at carbon-1 of 5-phospho-D-ribose 1,2-cyclic phosphate to form ribose 2,5-bisphosphate. This intermediate is then hydrolyzed to ribose-5-phosphate and inorganic phosphate. The polypeptide is Phosphoribosyl 1,2-cyclic phosphate 1,2-diphosphodiesterase (Eggerthella lenta (strain ATCC 25559 / DSM 2243 / CCUG 17323 / JCM 9979 / KCTC 3265 / NCTC 11813 / VPI 0255 / 1899 B) (Eubacterium lentum)).